We begin with the raw amino-acid sequence, 412 residues long: Keratin, type I microfibrillar 48 kDa, component 8C-1 (412 aa).

S1 is subject to N-acetylserine. Residues 1 to 55 form a head region; it reads SFNFCLPNLSFRSSCSSRPCVPSSCCGTTLPGACNIPANVGSCNWFCEGSFDGNE. Positions 55-366 constitute an IF rod domain; that stretch reads EKETMQFLND…GLLDSEDCKL (312 aa). A coil 1A region spans residues 56-90; that stretch reads KETMQFLNDRLASYLEKVRQLERENAELESRILER. A linker 1 region spans residues 91-101; the sequence is SQQQEPLVCPN. The interval 102–202 is coil 1B; sequence YQSYFRTIEE…HEEEVNTLRS (101 aa). Residues 203-218 are linker 12; it reads QLGDRLNVEVDAAPTV. The coil 2 stretch occupies residues 219–362; the sequence is DLNRVLNETR…NTYRGLLDSE (144 aa). The tail stretch occupies residues 363–412; sequence DCKLPCNPCATTNACGKTITPCISSPCAPAAPCTPCVPRSRCGPCNSYVR.

This sequence belongs to the intermediate filament family.

Its function is as follows. Wool microfibrillar keratin. This chain is Keratin, type I microfibrillar 48 kDa, component 8C-1, found in Ovis aries (Sheep).